Here is a 211-residue protein sequence, read N- to C-terminus: Uracil phosphoribosyltransferase (211 aa).

GTP is bound at residue 30-34 (KGLVR). 5-phospho-alpha-D-ribose 1-diphosphate is bound by residues Arg79, Arg104, and 133–141 (DPMLATGTT). Uracil is bound by residues Ile197 and 202–204 (GDA). Position 203 (Asp203) interacts with 5-phospho-alpha-D-ribose 1-diphosphate.

It belongs to the UPRTase family. Requires Mg(2+) as cofactor.

It carries out the reaction UMP + diphosphate = 5-phospho-alpha-D-ribose 1-diphosphate + uracil. It functions in the pathway pyrimidine metabolism; UMP biosynthesis via salvage pathway; UMP from uracil: step 1/1. With respect to regulation, allosterically activated by GTP. Functionally, catalyzes the conversion of uracil and 5-phospho-alpha-D-ribose 1-diphosphate (PRPP) to UMP and diphosphate. This chain is Uracil phosphoribosyltransferase, found in Pyrobaculum arsenaticum (strain DSM 13514 / JCM 11321 / PZ6).